The primary structure comprises 397 residues: Tryptophan synthase beta chain (397 aa).

K91 carries the post-translational modification N6-(pyridoxal phosphate)lysine.

It belongs to the TrpB family. In terms of assembly, tetramer of two alpha and two beta chains. Pyridoxal 5'-phosphate serves as cofactor.

It carries out the reaction (1S,2R)-1-C-(indol-3-yl)glycerol 3-phosphate + L-serine = D-glyceraldehyde 3-phosphate + L-tryptophan + H2O. It participates in amino-acid biosynthesis; L-tryptophan biosynthesis; L-tryptophan from chorismate: step 5/5. Its function is as follows. The beta subunit is responsible for the synthesis of L-tryptophan from indole and L-serine. The protein is Tryptophan synthase beta chain of Bacillus thuringiensis (strain Al Hakam).